Here is a 499-residue protein sequence, read N- to C-terminus: Calcium/calmodulin-dependent protein kinase type II subunit delta (499 aa).

The residue at position 2 (alanine 2) is an N-acetylalanine. In terms of domain architecture, Protein kinase spans 14–272 (YQLFEELGKG…ASEALKHPWI (259 aa)). ATP is bound by residues 20 to 28 (LGKGAFSVV) and lysine 43. Residue aspartate 136 is the Proton acceptor of the active site. Residues 283–292 (HRQETVDCLK) are autoinhibitory domain. The residue at position 287 (threonine 287) is a Phosphothreonine; by autocatalysis. The tract at residues 291 to 301 (LKKFNARRKLK) is calmodulin-binding. A phosphothreonine; by autocatalysis mark is found at threonine 306 and threonine 307. Serine 315 carries the phosphoserine modification. Lysine 318 is subject to N6-acetyllysine. A phosphoserine mark is found at serine 319 and serine 330. A Phosphothreonine modification is found at threonine 331. Serine 333 is modified (phosphoserine). 2 positions are modified to phosphothreonine: threonine 336 and threonine 337. Serine 404, serine 490, and serine 494 each carry phosphoserine.

It belongs to the protein kinase superfamily. CAMK Ser/Thr protein kinase family. CaMK subfamily. CAMK2 is composed of 4 different chains: alpha (CAMK2A), beta (CAMK2B), gamma (CAMK2G), and delta (CAMK2D). The different isoforms assemble into homo- or heteromultimeric holoenzymes composed of 12 subunits with two hexameric rings stacked one on top of the other. Interacts with RRAD CACNB2. Post-translationally, autophosphorylation of Thr-287 following activation by Ca(2+)/calmodulin. Phosphorylation of Thr-287 locks the kinase into an activated state.

It is found in the cell membrane. Its subcellular location is the sarcolemma. The protein resides in the sarcoplasmic reticulum membrane. The enzyme catalyses L-seryl-[protein] + ATP = O-phospho-L-seryl-[protein] + ADP + H(+). The catalysed reaction is L-threonyl-[protein] + ATP = O-phospho-L-threonyl-[protein] + ADP + H(+). With respect to regulation, activated by Ca(2+)/calmodulin. Binding of calmodulin results in conformational change that relieves intrasteric autoinhibition and allows autophosphorylation of Thr-287 which turns the kinase in a constitutively active form and confers to the kinase a Ca(2+)-independent activity. Functionally, calcium/calmodulin-dependent protein kinase involved in the regulation of Ca(2+) homeostatis and excitation-contraction coupling (ECC) in heart by targeting ion channels, transporters and accessory proteins involved in Ca(2+) influx into the myocyte, Ca(2+) release from the sarcoplasmic reticulum (SR), SR Ca(2+) uptake and Na(+) and K(+) channel transport. Targets also transcription factors and signaling molecules to regulate heart function. In its activated form, is involved in the pathogenesis of dilated cardiomyopathy and heart failure. Contributes to cardiac decompensation and heart failure by regulating SR Ca(2+) release via direct phosphorylation of RYR2 Ca(2+) channel on 'Ser-2808'. In the nucleus, phosphorylates the MEF2 repressor HDAC4, promoting its nuclear export and binding to 14-3-3 protein, and expression of MEF2 and genes involved in the hypertrophic program. Is essential for left ventricular remodeling responses to myocardial infarction. In pathological myocardial remodeling acts downstream of the beta adrenergic receptor signaling cascade to regulate key proteins involved in ECC. Regulates Ca(2+) influx to myocytes by binding and phosphorylating the L-type Ca(2+) channel subunit beta-2 CACNB2. In addition to Ca(2+) channels, can target and regulate the cardiac sarcolemmal Na(+) channel Nav1.5/SCN5A and the K+ channel Kv4.3/KCND3, which contribute to arrhythmogenesis in heart failure. Phosphorylates phospholamban (PLN/PLB), an endogenous inhibitor of SERCA2A/ATP2A2, contributing to the enhancement of SR Ca(2+) uptake that may be important in frequency-dependent acceleration of relaxation (FDAR) and maintenance of contractile function during acidosis. May participate in the modulation of skeletal muscle function in response to exercise, by regulating SR Ca(2+) transport through phosphorylation of PLN/PLB and triadin, a ryanodine receptor-coupling factor. In response to interferon-gamma (IFN-gamma) stimulation, catalyzes phosphorylation of STAT1, stimulating the JAK-STAT signaling pathway. This chain is Calcium/calmodulin-dependent protein kinase type II subunit delta (CAMK2D), found in Sus scrofa (Pig).